A 744-amino-acid chain; its full sequence is Prestin (744 aa).

The Cytoplasmic segment spans residues 1–75 (MDHAEENEIL…PITKWLPAYK (75 aa)). A helical membrane pass occupies residues 76–105 (FKEYVLGDLVSGISTGVLQLPQGLAFAMLA). Residues 106 to 108 (AVP) are Extracellular-facing. The helical transmembrane segment at 109 to 126 (PIFGLYSSFYPVIMYCFL) threads the bilayer. At 127–137 (GTSRHISIGPF) the chain is on the cytoplasmic side. The helical transmembrane segment at 138–151 (AVISLMIGGVAVRL) threads the bilayer. Residues 152–168 (VPDDIVIPGGVNATNGT) are Extracellular-facing. Residues 158 to 168 (IPGGVNATNGT) carry the Involved in motor function motif. 2 N-linked (GlcNAc...) asparagine glycosylation sites follow: Asn163 and Asn166. A helical transmembrane segment spans residues 169 to 196 (EARDALRVKVAMSVTLLSGIIQFCLGVC). At 197–206 (RFGFVAIYLT) the chain is on the cytoplasmic side. A helical transmembrane segment spans residues 207–230 (EPLVRGFTTAAAVHVFTSMLKYLF). Topologically, residues 231–241 (GVKTKRYSGIF) are extracellular. An intramembrane region (helical) is located at residues 242 to 253 (SVVYSTVAVLQN). Over 254–258 (VKNLN) the chain is Extracellular. A helical transmembrane segment spans residues 259–282 (VCSLGVGLMVFGLLLGGKEFNERF). At 283 to 291 (KEKLPAPIP) the chain is on the cytoplasmic side. A helical membrane pass occupies residues 292–307 (LEFFAVVMGTGISAGF). Over 308–332 (NLKESYNVDVVGTLPLGLLPPANPD) the chain is Extracellular. A helical membrane pass occupies residues 333-367 (TSLFHLVYVDAIAIAIVGFSVTISMAKTLANKHGY). Residues 368–370 (QVD) lie on the Cytoplasmic side of the membrane. The chain crosses the membrane as a helical span at residues 371 to 388 (GNQELIALGLCNSIGSLF). Residues 389–396 (QTFSISCS) are Extracellular-facing. Residues 397–406 (LSRSLVQEGT) traverse the membrane as a helical segment. Position 398 (Ser398) interacts with salicylate. Topologically, residues 407-410 (GGKT) are cytoplasmic. The chain crosses the membrane as a helical span at residues 411–432 (QLAGCLASLMILLVILATGFLF). The Extracellular portion of the chain corresponds to 433–436 (ESLP). The helical transmembrane segment at 437–464 (QAVLSAIVIVNLKGMFMQFSDLPFFWRT) threads the bilayer. Ser465 is a topological domain (cytoplasmic). Residues 466-481 (KIELTIWLTTFVSSLF) form a helical membrane-spanning segment. At 482 to 483 (LG) the chain is on the extracellular side. A helical transmembrane segment spans residues 484-504 (LDYGLITAVIIALLTVIYRTQ). Residues 505 to 718 (SPSYKVLGKL…AVLGSQLREA (214 aa)) are extended region for STAS domain. The Cytoplasmic portion of the chain corresponds to 505-744 (SPSYKVLGKL…PNATPATPEA (240 aa)). The STAS domain maps to 525-713 (AYEEVKEIPG…HSIHDAVLGS (189 aa)). Residues 718-744 (ALAEQEASAPPSQEDLEPNATPATPEA) form a disordered region.

The protein belongs to the SLC26A/SulP transporter (TC 2.A.53) family. In terms of assembly, homodimer. Interacts (via STAS domain) with CALM; this interaction is calcium-dependent and the STAS domain interacts with only one lobe of CALM which is an elongated conformation. Interacts with MYH1.

It localises to the lateral cell membrane. It carries out the reaction 2 hydrogencarbonate(in) + chloride(out) = 2 hydrogencarbonate(out) + chloride(in). Voltage-sensitive motor protein that drives outer hair cell (OHC) electromotility (eM) and participates in sound amplification in the hearing organ. Converts changes in the transmembrane electric potential into mechanical displacements resulting in the coupling of its expansion to movement of a charged voltage sensor across the lipid membrane. The nature of the voltage sensor is not completely clear, and two models compete. In the first model, acts as an incomplete transporter where intracellular chloride anion acts as extrinsic voltage sensor that drives conformational change in the protein which is sufficient to produce a length change in the plane of the membrane and hence in the length of the OHC. The second model in which multiple charged amino acid residues are distributed at the intracellular and extracellular membrane interfaces that form an intrinsic voltage sensor, whose movement produces the non-linear capacitance (NLC). However, the effective voltage sensor may be the result of a hybrid voltage sensor, assembled from intrinsic charge (charged residues) and extrinsic charge (bound anion). Notably, binding of anions to the anion-binding pocket partially neutralizes the intrinsic positive charge rather than to form an electrically negative sensor, therefore remaining charge may serve as voltage sensor that, after depolarization, moves from down (expanded state) to up (contracted) conformation, which is accompanied by an eccentric contraction of the intermembrane cross-sectional area of the protein as well as a major increase in the hydrophobic thickness of the protein having as consequences the plasma membrane thickening and the cell contraction after membrane depolarization. The anion-binding pocket transits from the inward-open (Down) state, where it is exposed toward the intracellular solvent in the absence of anion, to the occluded (Up) state upon anion binding. Salicylate competes for the anion-binding site and inhibits the voltage-sensor movement, and therefore inhibits the charge transfer and electromotility by displacing Cl(-) from the anion-binding site and by preventing the structural transitions to the contracted state. In addition, can act as a weak Cl(-)/HCO3(-) antiporter across the cell membrane and so regulate the intracellular pH of the outer hair cells (OHCs), while firstly found as being unable to mediate electrogenic anion transport. Moreover, supports a role in cardiac mechanical amplification serving as an elastic element to enhance the actomyosin- based sarcomere contraction system. This chain is Prestin, found in Homo sapiens (Human).